The following is a 263-amino-acid chain: Phosphate import ATP-binding protein PstB (263 aa).

The region spanning 16-258 (VTARNVTVSY…PRDTRTQDYI (243 aa)) is the ABC transporter domain. 48-55 (GPSGCGKS) serves as a coordination point for ATP.

It belongs to the ABC transporter superfamily. Phosphate importer (TC 3.A.1.7) family. The complex is composed of two ATP-binding proteins (PstB), two transmembrane proteins (PstC and PstA) and a solute-binding protein (PstS).

It is found in the cell inner membrane. The enzyme catalyses phosphate(out) + ATP + H2O = ADP + 2 phosphate(in) + H(+). In terms of biological role, part of the ABC transporter complex PstSACB involved in phosphate import. Responsible for energy coupling to the transport system. The polypeptide is Phosphate import ATP-binding protein PstB (Maricaulis maris (strain MCS10) (Caulobacter maris)).